We begin with the raw amino-acid sequence, 242 residues long: Large ribosomal subunit protein uL1 (242 aa).

This sequence belongs to the universal ribosomal protein uL1 family. In terms of assembly, part of the 50S ribosomal subunit.

Its function is as follows. Binds directly to 23S rRNA. The L1 stalk is quite mobile in the ribosome, and is involved in E site tRNA release. Functionally, protein L1 is also a translational repressor protein, it controls the translation of the L11 operon by binding to its mRNA. This Kitasatospora aureofaciens (Streptomyces aureofaciens) protein is Large ribosomal subunit protein uL1.